The primary structure comprises 92 residues: Large ribosomal subunit protein eL31 (92 aa).

Belongs to the eukaryotic ribosomal protein eL31 family.

The chain is Large ribosomal subunit protein eL31 from Desulfurococcus amylolyticus (strain DSM 18924 / JCM 16383 / VKM B-2413 / 1221n) (Desulfurococcus kamchatkensis).